We begin with the raw amino-acid sequence, 159 residues long: Globin CTT-W (159 aa).

Positions 1–16 are cleaved as a signal peptide; the sequence is MKFLVILTLCIAGAIA. In terms of domain architecture, Globin spans 17-159; that stretch reads HCDKAPFIKA…HHAIVYSILE (143 aa). Positions 73 and 108 each coordinate heme b.

Belongs to the globin family.

The protein is Globin CTT-W (CTT-W) of Chironomus thummi thummi (Midge).